We begin with the raw amino-acid sequence, 526 residues long: Cytochrome P450 4e2 (526 aa).

Residues Glu307 and Cys444 each contribute to the heme site.

This sequence belongs to the cytochrome P450 family. Heme serves as cofactor.

It localises to the endoplasmic reticulum membrane. The protein localises to the microsome membrane. In terms of biological role, may be involved in the metabolism of insect hormones and in the breakdown of synthetic insecticides. This chain is Cytochrome P450 4e2 (Cyp4e2), found in Drosophila melanogaster (Fruit fly).